Here is an 84-residue protein sequence, read N- to C-terminus: Cytochrome b559 subunit alpha (84 aa).

The chain crosses the membrane as a helical span at residues 24-38 (IIHAVTLPAIFIAGF). His26 provides a ligand contact to heme.

Belongs to the PsbE/PsbF family. As to quaternary structure, heterodimer of an alpha subunit and a beta subunit. PSII is composed of 1 copy each of membrane proteins PsbA, PsbB, PsbC, PsbD, PsbE, PsbF, PsbH, PsbI, PsbJ, PsbK, PsbL, PsbM, PsbT, PsbX, PsbY, Psb30/Ycf12, peripheral proteins PsbO, CyanoQ (PsbQ), PsbU, PsbV and a large number of cofactors. It forms dimeric complexes. Heme b is required as a cofactor.

Its subcellular location is the cellular thylakoid membrane. Functionally, this b-type cytochrome is tightly associated with the reaction center of photosystem II (PSII). PSII is a light-driven water:plastoquinone oxidoreductase that uses light energy to abstract electrons from H(2)O, generating O(2) and a proton gradient subsequently used for ATP formation. It consists of a core antenna complex that captures photons, and an electron transfer chain that converts photonic excitation into a charge separation. The chain is Cytochrome b559 subunit alpha from Prochlorococcus marinus subsp. pastoris (strain CCMP1986 / NIES-2087 / MED4).